The chain runs to 490 residues: Subtilisin-like protease 8 (490 aa).

An N-terminal signal peptide occupies residues 1–26 (MKGLLSLSVLPVLAYASPMIVDSIHQ). Residues 27 to 134 (NAAPILSSTN…YIERDSEVHT (108 aa)) constitute a propeptide that is removed on maturation. One can recognise an Inhibitor I9 domain in the interval 43–134 (SYIVVFKKGV…YIERDSEVHT (92 aa)). In terms of domain architecture, Peptidase S8 spans 144–450 (PWGLARISHR…GGSDDYKKII (307 aa)). Residues Asp180 and His212 each act as charge relay system in the active site. An N-linked (GlcNAc...) asparagine glycan is attached at Asn282. The active-site Charge relay system is Ser378. Asn456 is a glycosylation site (N-linked (GlcNAc...) asparagine).

The protein belongs to the peptidase S8 family.

The protein localises to the secreted. In terms of biological role, secreted subtilisin-like serine protease with keratinolytic activity that contributes to pathogenicity. This Trichophyton verrucosum (strain HKI 0517) protein is Subtilisin-like protease 8 (SUB8).